Here is a 296-residue protein sequence, read N- to C-terminus: Aspartate and glycine-rich protein (296 aa).

Residues 1-77 (GDGENGNGNG…GNGNGNGNGN (77 aa)) show a composition bias toward gly residues. 2 disordered regions span residues 1 to 219 (GDGE…DNGG) and 233 to 296 (RARA…YTSY). Acidic residues-rich tracts occupy residues 80-96 (FDDD…DDWN) and 103-194 (NGDD…DDRW). Gly residues predominate over residues 198-210 (NGNGNGNGNGNGN). Over residues 233–243 (RARAAASAAGR) the composition is skewed to low complexity. Positions 244-259 (SRGGSGGSGGSGGSGG) are enriched in gly residues. Positions 270-281 (RAFASARASSGN) are enriched in low complexity.

Component of the acid-soluble and acid-insoluble organic matrix of calcified shell layers (at protein level).

The protein localises to the secreted. The protein is Aspartate and glycine-rich protein of Haliotis asinina (Donkey's ear abalone).